The chain runs to 123 residues: Small ribosomal subunit protein uS13c (123 aa).

A disordered region spans residues 90 to 123 (GKRHRNNLPVRGQRTRTNARSRRGSKKTVTGKKK). Over residues 102–123 (QRTRTNARSRRGSKKTVTGKKK) the composition is skewed to basic residues.

This sequence belongs to the universal ribosomal protein uS13 family. In terms of assembly, part of the 30S ribosomal subunit.

It is found in the plastid. The protein localises to the chloroplast. Functionally, located at the top of the head of the 30S subunit, it contacts several helices of the 16S rRNA. This chain is Small ribosomal subunit protein uS13c, found in Trieres chinensis (Marine centric diatom).